A 716-amino-acid chain; its full sequence is Mitogen-activated protein kinase kinase kinase 5 (716 aa).

Over residues 1-27 the composition is skewed to low complexity; it reads MRWLPQISFSSPSSSPSSSLKPVASYS. Disordered regions lie at residues 1–42, 74–98, 119–180, and 238–302; these read MRWL…DRFH, ASTSSSTFDSGLTRSPSAFTAVPRS, AANA…YWVN, and YDIT…VTNG. Positions 31–40 are enriched in basic and acidic residues; sequence DPDRNQDRDR. The segment covering 75 to 91 has biased composition (polar residues); sequence STSSSTFDSGLTRSPSA. Positions 124–137 are enriched in basic and acidic residues; the sequence is GLDDRDRDPERLIS. 3 stretches are compositionally biased toward polar residues: residues 138 to 150, 162 to 173, and 242 to 251; these read DRTSSGPPLTSVN, ENSSYQDFSPRN, and AFSTDNSPIH. The segment covering 263 to 273 has biased composition (low complexity); that stretch reads RSPQPSRPSSP. The region spanning 346 to 607 is the Protein kinase domain; the sequence is WKKGKLIGRG…ASMLLEHRFL (262 aa). Residues 352–360 and lysine 375 contribute to the ATP site; that span reads IGRGTFGSV. Aspartate 472 (proton acceptor) is an active-site residue. Over residues 610 to 633 the composition is skewed to polar residues; that stretch reads SLQPTSPSNSDVSQLFNGMNITEP. The tract at residues 610 to 716 is disordered; that stretch reads SLQPTSPSNS…RRTGVTSDHL (107 aa). Serine 617 and serine 622 each carry phosphoserine; by PBL27. Over residues 634–648 the composition is skewed to basic and acidic residues; it reads SSRREKPNFKLDQVP. Composition is skewed to polar residues over residues 652–661 and 674–685; these read NMTSSESESG and LTGTVNRLSPRS. Phosphoserine; by PBL27 occurs at positions 658 and 660. Threonine 677 carries the post-translational modification Phosphothreonine; by PBL27. A Phosphoserine; by PBL27 modification is found at serine 685. Positions 703–716 are enriched in basic and acidic residues; it reads SSDRRRTGVTSDHL.

This sequence belongs to the protein kinase superfamily. STE Ser/Thr protein kinase family. MAP kinase kinase kinase subfamily. As to quaternary structure, interacts with PBL27 at the plasma membrane; disassociation is induced by chitin perception by the CERK1 complex. Interacts with MKK2, MKK4, and MKK5 mainly in the cytosol. Phosphorylated by PBL27 during chitin-mediated signaling in a CERK1-dependent manner. In terms of tissue distribution, mostly expressed in flower buds. Also present in pollen, roots, leaves and seedlings, and, at low levels, in stems and immature siliques.

The protein resides in the cell membrane. It is found in the cytoplasm. The protein localises to the cytosol. The enzyme catalyses L-seryl-[protein] + ATP = O-phospho-L-seryl-[protein] + ADP + H(+). The catalysed reaction is L-threonyl-[protein] + ATP = O-phospho-L-threonyl-[protein] + ADP + H(+). In terms of biological role, mitogen-activated protein kinase (MAPK) involved in the transduction of signal between the host cell surface chitin receptor complex CERK1-LYK5 and the intracellular MAPK cascade that leads to chitin-induced immunity. Phosphorylates and activates MAPK targets (e.g. MKK4, MKK5, and possibly MKK2) when phosphorylated by PBL27 after elicitation by chitin. Required for resistance to the fungus A.brassicicola. The protein is Mitogen-activated protein kinase kinase kinase 5 of Arabidopsis thaliana (Mouse-ear cress).